Reading from the N-terminus, the 64-residue chain is Large ribosomal subunit protein bL35 (64 aa).

The interval M1–R29 is disordered.

It belongs to the bacterial ribosomal protein bL35 family.

This is Large ribosomal subunit protein bL35 from Pseudarthrobacter chlorophenolicus (strain ATCC 700700 / DSM 12829 / CIP 107037 / JCM 12360 / KCTC 9906 / NCIMB 13794 / A6) (Arthrobacter chlorophenolicus).